The primary structure comprises 437 residues: GTPase Obg (437 aa).

An Obg domain is found at 2–160; it reads SMFLDTAKIS…RELQLELKIL (159 aa). The OBG-type G domain occupies 161 to 338; the sequence is ADVGLVGFPS…LMDATAELLA (178 aa). GTP-binding positions include 167–174, 192–196, 214–217, 284–287, and 319–321; these read GFPSVGKS, FTTIV, DLPG, NKMD, and SSL. Mg(2+) is bound by residues serine 174 and threonine 194. The 79-residue stretch at 359 to 437 folds into the OCT domain; that stretch reads GFNEDERPFE…IGNFEFEFVD (79 aa).

The protein belongs to the TRAFAC class OBG-HflX-like GTPase superfamily. OBG GTPase family. Monomer. The cofactor is Mg(2+).

Its subcellular location is the cytoplasm. An essential GTPase which binds GTP, GDP and possibly (p)ppGpp with moderate affinity, with high nucleotide exchange rates and a fairly low GTP hydrolysis rate. Plays a role in control of the cell cycle, stress response, ribosome biogenesis and in those bacteria that undergo differentiation, in morphogenesis control. This Streptococcus agalactiae serotype Ia (strain ATCC 27591 / A909 / CDC SS700) protein is GTPase Obg.